The sequence spans 769 residues: Major inner protein P1 (769 aa).

Homodimer. Associates with the polymerase complex.

The protein resides in the virion. In terms of biological role, P1 is the major inner capsid (core) protein of the polyhedral procapsid, which is responsible for genomic replication and transcription. Forms a dodecahedral shell from 60 asymmetric dimers. Binds to RNA and may be involved in genomic packaging. This is Major inner protein P1 (P1) from Pseudomonas phage phi6 (Bacteriophage phi-6).